The sequence spans 335 residues: Holliday junction branch migration complex subunit RuvB (335 aa).

The tract at residues 1–181 (MERIIEIEKM…FGMNFWMQFY (181 aa)) is large ATPase domain (RuvB-L). ATP contacts are provided by residues L20, R21, G62, K65, T66, T67, 128 to 130 (EDF), R171, Y181, and R218. Residue T66 participates in Mg(2+) binding. The segment at 182 to 252 (NIEELSQIIT…QARYALHELG (71 aa)) is small ATPAse domain (RuvB-S). Positions 255-335 (DHGFDDLDLR…LPFEPNATLF (81 aa)) are head domain (RuvB-H). Residues R309 and R314 each contribute to the DNA site.

The protein belongs to the RuvB family. In terms of assembly, homohexamer. Forms an RuvA(8)-RuvB(12)-Holliday junction (HJ) complex. HJ DNA is sandwiched between 2 RuvA tetramers; dsDNA enters through RuvA and exits via RuvB. An RuvB hexamer assembles on each DNA strand where it exits the tetramer. Each RuvB hexamer is contacted by two RuvA subunits (via domain III) on 2 adjacent RuvB subunits; this complex drives branch migration. In the full resolvosome a probable DNA-RuvA(4)-RuvB(12)-RuvC(2) complex forms which resolves the HJ.

The protein localises to the cytoplasm. The enzyme catalyses ATP + H2O = ADP + phosphate + H(+). In terms of biological role, the RuvA-RuvB-RuvC complex processes Holliday junction (HJ) DNA during genetic recombination and DNA repair, while the RuvA-RuvB complex plays an important role in the rescue of blocked DNA replication forks via replication fork reversal (RFR). RuvA specifically binds to HJ cruciform DNA, conferring on it an open structure. The RuvB hexamer acts as an ATP-dependent pump, pulling dsDNA into and through the RuvAB complex. RuvB forms 2 homohexamers on either side of HJ DNA bound by 1 or 2 RuvA tetramers; 4 subunits per hexamer contact DNA at a time. Coordinated motions by a converter formed by DNA-disengaged RuvB subunits stimulates ATP hydrolysis and nucleotide exchange. Immobilization of the converter enables RuvB to convert the ATP-contained energy into a lever motion, pulling 2 nucleotides of DNA out of the RuvA tetramer per ATP hydrolyzed, thus driving DNA branch migration. The RuvB motors rotate together with the DNA substrate, which together with the progressing nucleotide cycle form the mechanistic basis for DNA recombination by continuous HJ branch migration. Branch migration allows RuvC to scan DNA until it finds its consensus sequence, where it cleaves and resolves cruciform DNA. This Wolinella succinogenes (strain ATCC 29543 / DSM 1740 / CCUG 13145 / JCM 31913 / LMG 7466 / NCTC 11488 / FDC 602W) (Vibrio succinogenes) protein is Holliday junction branch migration complex subunit RuvB.